We begin with the raw amino-acid sequence, 599 residues long: UPF0313 protein UNCMA_01890 (599 aa).

The 277-residue stretch at 281 to 557 (EDIPALRTVR…RALLQYKNPE (277 aa)) folds into the Radical SAM core domain. 3 residues coordinate [4Fe-4S] cluster: Cys299, Cys303, and Cys306.

It belongs to the UPF0313 family. [4Fe-4S] cluster serves as cofactor.

This Methanocella arvoryzae (strain DSM 22066 / NBRC 105507 / MRE50) protein is UPF0313 protein UNCMA_01890.